An 81-amino-acid polypeptide reads, in one-letter code: ATP synthase subunit c, chloroplastic (81 aa).

The next 2 helical transmembrane spans lie at 3–23 (PIISAASVIAAGLAVGLASIG) and 57–77 (LAFMEALTIYGLVVALALLFA).

It belongs to the ATPase C chain family. F-type ATPases have 2 components, F(1) - the catalytic core - and F(0) - the membrane proton channel. F(1) has five subunits: alpha(3), beta(3), gamma(1), delta(1), epsilon(1). F(0) has four main subunits: a(1), b(1), b'(1) and c(10-14). The alpha and beta chains form an alternating ring which encloses part of the gamma chain. F(1) is attached to F(0) by a central stalk formed by the gamma and epsilon chains, while a peripheral stalk is formed by the delta, b and b' chains.

Its subcellular location is the plastid. It localises to the chloroplast thylakoid membrane. Functionally, f(1)F(0) ATP synthase produces ATP from ADP in the presence of a proton or sodium gradient. F-type ATPases consist of two structural domains, F(1) containing the extramembraneous catalytic core and F(0) containing the membrane proton channel, linked together by a central stalk and a peripheral stalk. During catalysis, ATP synthesis in the catalytic domain of F(1) is coupled via a rotary mechanism of the central stalk subunits to proton translocation. In terms of biological role, key component of the F(0) channel; it plays a direct role in translocation across the membrane. A homomeric c-ring of between 10-14 subunits forms the central stalk rotor element with the F(1) delta and epsilon subunits. In Welwitschia mirabilis (Tree tumbo), this protein is ATP synthase subunit c, chloroplastic.